We begin with the raw amino-acid sequence, 385 residues long: MRDYYEILGVTRTIDEAGLKSAFRKLAMEHHPDRNGGCENAAGRFKEINEAYSVLSDPQKRAAYDRFGHAGVNGPQGGPGGFGGQGFDASDIFNDVFGDVFGEMFGGGRRQSNAPQRGQDLRYDLEITLEQAYAGAEVEITVPAAMTCEVCEGSGAKPGTSPSVCGTCGGAGRVRATQGFFAVERGCPRCGGSGRLVLDPCSNCHGHGQVRRERILSVRIPAGVDDGARIRLAGEGDAGARGGPRGDLYIFLSVTPHELFERDGLDLLCTVPVPMTTAALGGEIDAPCLLGGESCDGECKVKVHVPEGAQTGKTVRLKGKGMPSLRSRQRGDLVVELFVETPTHLSARQKELMRELAGLCGEKQNPKSANFVGKAKRFWEEVTGS.

Residues 3–68 enclose the J domain; that stretch reads DYYEILGVTR…QKRAAYDRFG (66 aa). Residues 135–213 form a CR-type zinc finger; it reads GAEVEITVPA…CHGHGQVRRE (79 aa). 8 residues coordinate Zn(2+): cysteine 148, cysteine 151, cysteine 165, cysteine 168, cysteine 187, cysteine 190, cysteine 201, and cysteine 204. CXXCXGXG motif repeat units follow at residues 148 to 155, 165 to 172, 187 to 194, and 201 to 208; these read CEVCEGSG, CGTCGGAG, CPRCGGSG, and CSNCHGHG.

The protein belongs to the DnaJ family. As to quaternary structure, homodimer. The cofactor is Zn(2+).

Its subcellular location is the cytoplasm. In terms of biological role, participates actively in the response to hyperosmotic and heat shock by preventing the aggregation of stress-denatured proteins and by disaggregating proteins, also in an autonomous, DnaK-independent fashion. Unfolded proteins bind initially to DnaJ; upon interaction with the DnaJ-bound protein, DnaK hydrolyzes its bound ATP, resulting in the formation of a stable complex. GrpE releases ADP from DnaK; ATP binding to DnaK triggers the release of the substrate protein, thus completing the reaction cycle. Several rounds of ATP-dependent interactions between DnaJ, DnaK and GrpE are required for fully efficient folding. Also involved, together with DnaK and GrpE, in the DNA replication of plasmids through activation of initiation proteins. This Caulobacter vibrioides (strain ATCC 19089 / CIP 103742 / CB 15) (Caulobacter crescentus) protein is Chaperone protein DnaJ.